We begin with the raw amino-acid sequence, 125 residues long: Apoptosis inhibitor Rv3655c (125 aa).

The first 33 residues, 1 to 33, serve as a signal peptide directing secretion; the sequence is MEAALAIATLVLVLVLCLAGVTAVSMQVRCIDA.

As to quaternary structure, interacts with human E3 ubiquitin-protein ligase RNF213.

The protein localises to the secreted. It localises to the host cytoplasm. Functionally, effector protein that participates in the suppression of macrophage apoptosis by blocking the extrinsic pathway. Interferes with caspase-8 activation and binds to the host E3 ubiquitin-protein ligase RNF213, whose fusion partners have anti-apoptotic function. The protein is Apoptosis inhibitor Rv3655c of Mycobacterium tuberculosis (strain ATCC 25618 / H37Rv).